The following is an 84-amino-acid chain: Venom protein SynTx (84 aa).

The signal sequence occupies residues 1–19 (TLLLTLVVVTIVCLDLGYT). Intrachain disulfides connect C22/C43, C36/C61, C65/C76, and C77/C82.

This sequence belongs to the three-finger toxin family. Short-chain subfamily. Aminergic toxin sub-subfamily. In terms of assembly, homodimer; disulfide-linked. As to expression, expressed by the venom gland.

Its subcellular location is the secreted. In terms of biological role, this protein shows a synergetic toxic effect in that it enhances the toxicity of other toxins. The chain is Venom protein SynTx from Dendroaspis jamesoni jamesoni (Jameson's mamba).